A 63-amino-acid polypeptide reads, in one-letter code: Cecropin-2 (63 aa).

The signal sequence occupies residues 1-23 (MNFYKVFIFVALILAISLGQSEA). R62 carries the arginine amide modification.

Belongs to the cecropin family.

It is found in the secreted. Functionally, cecropins have lytic and antibacterial activity against several Gram-positive and Gram-negative bacteria. This is Cecropin-2 (Cec2A) from Drosophila virilis (Fruit fly).